We begin with the raw amino-acid sequence, 479 residues long: ATP synthase subunit beta (479 aa).

153-160 (GGAGVGKT) is an ATP binding site.

Belongs to the ATPase alpha/beta chains family. As to quaternary structure, F-type ATPases have 2 components, CF(1) - the catalytic core - and CF(0) - the membrane proton channel. CF(1) has five subunits: alpha(3), beta(3), gamma(1), delta(1), epsilon(1). CF(0) has three main subunits: a(1), b(2) and c(9-12). The alpha and beta chains form an alternating ring which encloses part of the gamma chain. CF(1) is attached to CF(0) by a central stalk formed by the gamma and epsilon chains, while a peripheral stalk is formed by the delta and b chains.

It is found in the cell membrane. It catalyses the reaction ATP + H2O + 4 H(+)(in) = ADP + phosphate + 5 H(+)(out). Produces ATP from ADP in the presence of a proton gradient across the membrane. The catalytic sites are hosted primarily by the beta subunits. The protein is ATP synthase subunit beta of Lactobacillus delbrueckii subsp. bulgaricus (strain ATCC BAA-365 / Lb-18).